Consider the following 284-residue polypeptide: Nucleotide-binding protein NMC0691 (284 aa).

8-15 is an ATP binding site; sequence GLSGSGKS. 58–61 lines the GTP pocket; the sequence is DVRS.

It belongs to the RapZ-like family.

Displays ATPase and GTPase activities. This chain is Nucleotide-binding protein NMC0691, found in Neisseria meningitidis serogroup C / serotype 2a (strain ATCC 700532 / DSM 15464 / FAM18).